The chain runs to 359 residues: 3-dehydroquinate synthase (359 aa).

NAD(+) is bound by residues 71–76 (DGEQFK), 105–109 (GVIGD), 129–130 (TT), K142, K151, and 169–172 (CLHT). Zn(2+)-binding residues include E184, H247, and H264.

It belongs to the sugar phosphate cyclases superfamily. Dehydroquinate synthase family. Requires Co(2+) as cofactor. It depends on Zn(2+) as a cofactor. NAD(+) serves as cofactor.

The protein localises to the cytoplasm. The catalysed reaction is 7-phospho-2-dehydro-3-deoxy-D-arabino-heptonate = 3-dehydroquinate + phosphate. The protein operates within metabolic intermediate biosynthesis; chorismate biosynthesis; chorismate from D-erythrose 4-phosphate and phosphoenolpyruvate: step 2/7. Catalyzes the conversion of 3-deoxy-D-arabino-heptulosonate 7-phosphate (DAHP) to dehydroquinate (DHQ). This Shewanella sp. (strain W3-18-1) protein is 3-dehydroquinate synthase.